The sequence spans 396 residues: Ribosomal RNA large subunit methyltransferase I (396 aa).

The region spanning S2–R81 is the PUA domain.

Belongs to the methyltransferase superfamily. RlmI family.

It localises to the cytoplasm. It catalyses the reaction cytidine(1962) in 23S rRNA + S-adenosyl-L-methionine = 5-methylcytidine(1962) in 23S rRNA + S-adenosyl-L-homocysteine + H(+). Its function is as follows. Specifically methylates the cytosine at position 1962 (m5C1962) of 23S rRNA. The protein is Ribosomal RNA large subunit methyltransferase I of Shigella flexneri.